A 243-amino-acid polypeptide reads, in one-letter code: NAD(P)H-quinone oxidoreductase subunit K (243 aa).

[4Fe-4S] cluster is bound by residues C59, C60, C124, and C155.

It belongs to the complex I 20 kDa subunit family. In terms of assembly, NDH-1 can be composed of about 15 different subunits; different subcomplexes with different compositions have been identified which probably have different functions. It depends on [4Fe-4S] cluster as a cofactor.

Its subcellular location is the cellular thylakoid membrane. It catalyses the reaction a plastoquinone + NADH + (n+1) H(+)(in) = a plastoquinol + NAD(+) + n H(+)(out). It carries out the reaction a plastoquinone + NADPH + (n+1) H(+)(in) = a plastoquinol + NADP(+) + n H(+)(out). In terms of biological role, NDH-1 shuttles electrons from an unknown electron donor, via FMN and iron-sulfur (Fe-S) centers, to quinones in the respiratory and/or the photosynthetic chain. The immediate electron acceptor for the enzyme in this species is believed to be plastoquinone. Couples the redox reaction to proton translocation, and thus conserves the redox energy in a proton gradient. Cyanobacterial NDH-1 also plays a role in inorganic carbon-concentration. The protein is NAD(P)H-quinone oxidoreductase subunit K of Picosynechococcus sp. (strain ATCC 27264 / PCC 7002 / PR-6) (Agmenellum quadruplicatum).